The chain runs to 573 residues: 2-succinyl-5-enolpyruvyl-6-hydroxy-3-cyclohexene-1-carboxylate synthase (573 aa).

It belongs to the TPP enzyme family. MenD subfamily. In terms of assembly, homodimer. It depends on Mg(2+) as a cofactor. Requires Mn(2+) as cofactor. The cofactor is thiamine diphosphate.

The catalysed reaction is isochorismate + 2-oxoglutarate + H(+) = 5-enolpyruvoyl-6-hydroxy-2-succinyl-cyclohex-3-ene-1-carboxylate + CO2. The protein operates within quinol/quinone metabolism; 1,4-dihydroxy-2-naphthoate biosynthesis; 1,4-dihydroxy-2-naphthoate from chorismate: step 2/7. It functions in the pathway quinol/quinone metabolism; menaquinone biosynthesis. Catalyzes the thiamine diphosphate-dependent decarboxylation of 2-oxoglutarate and the subsequent addition of the resulting succinic semialdehyde-thiamine pyrophosphate anion to isochorismate to yield 2-succinyl-5-enolpyruvyl-6-hydroxy-3-cyclohexene-1-carboxylate (SEPHCHC). In Shewanella sp. (strain ANA-3), this protein is 2-succinyl-5-enolpyruvyl-6-hydroxy-3-cyclohexene-1-carboxylate synthase.